The primary structure comprises 247 residues: Chloride intracellular channel protein 2 (247 aa).

The interval 1-94 is N-terminal; sequence MSGLRPGTQV…KIEEFLEQTL (94 aa). The tract at residues 1–96 is required for insertion into the membrane; the sequence is MSGLRPGTQV…EEFLEQTLAP (96 aa). A glutathione-binding site is contributed by E25. The G-site motif lies at 30 to 33; sequence CPFC. C30 and C33 form a disulfide bridge. The chain crosses the membrane as a helical span at residues 32 to 52; that stretch reads FCQRLFMILWLKGVKFNVTTV. One can recognise a GST C-terminal domain in the interval 76-239; sequence NKELKTDFIK…PEDKEIENTY (164 aa). The segment at 95-106 is joint loop; the sequence is APPRYPHLSPKY. Residues 107 to 247 form a C-terminal region; that stretch reads KESFDVGCNL…TYANVAKQKS (141 aa). A foot loop region spans residues 151–171; the sequence is NTPLLDEIDPDSAEEPPVSRR. H227 provides a ligand contact to glutathione.

The protein belongs to the chloride channel CLIC family. As to quaternary structure, monomer. Interacts with TRAPPC2 and RYR2. Expressed in adult and fetal brain, heart, skeletal muscle, liver, lung, and spleen. Detected in adult stomach and testis. Expressed in fetal thymus and kidney.

The protein resides in the cytoplasm. The protein localises to the membrane. The enzyme catalyses chloride(in) = chloride(out). The catalysed reaction is tert-butyl hydroperoxide + 2 glutathione = tert-butanol + glutathione disulfide + H2O. It carries out the reaction cumene hydroperoxide + 2 glutathione = 2-phenylpropan-2-ol + glutathione disulfide + H2O. The channel conductance is regulated by pH. In terms of biological role, in the soluble state, catalyzes glutaredoxin-like thiol disulfide exchange reactions with reduced glutathione as electron donor. Displays weak glutathione peroxidase activity. Can insert into membranes and form chloride ion channels. Membrane insertion seems to be redox-regulated and may occur only under oxidizing conditions. Modulates the activity of RYR2 and inhibits calcium influx. The polypeptide is Chloride intracellular channel protein 2 (Homo sapiens (Human)).